Consider the following 536-residue polypeptide: Phosphoenolpyruvate carboxykinase (ATP) (536 aa).

The substrate site is built by R63, Y203, and K209. ATP is bound by residues K209, H228, and 244–252 (GLSGTGKTT). K209 and H228 together coordinate Mn(2+). A Mn(2+)-binding site is contributed by D265. ATP contacts are provided by residues E293, R329, 445–446 (RI), and T451. R329 is a substrate binding site.

This sequence belongs to the phosphoenolpyruvate carboxykinase (ATP) family. Monomer. Requires Mn(2+) as cofactor.

Its subcellular location is the cytoplasm. The catalysed reaction is oxaloacetate + ATP = phosphoenolpyruvate + ADP + CO2. It participates in carbohydrate biosynthesis; gluconeogenesis. Involved in the gluconeogenesis. Catalyzes the conversion of oxaloacetate (OAA) to phosphoenolpyruvate (PEP) through direct phosphoryl transfer between the nucleoside triphosphate and OAA. The chain is Phosphoenolpyruvate carboxykinase (ATP) from Colwellia psychrerythraea (strain 34H / ATCC BAA-681) (Vibrio psychroerythus).